The sequence spans 198 residues: Putative glutathione S-transferase alpha-5 (198 aa).

In terms of domain architecture, GST N-terminal spans 2 to 78 (TKPTLTYFPV…YISEKHDFRG (77 aa)). Residues tyrosine 8, arginine 42, 49–50 (QL), and 62–63 (QT) contribute to the glutathione site. Positions 80-198 (TKEERARAHQ…YLESRPQSNF (119 aa)) constitute a GST C-terminal domain.

It belongs to the GST superfamily. Alpha family.

It carries out the reaction RX + glutathione = an S-substituted glutathione + a halide anion + H(+). In terms of biological role, conjugation of reduced glutathione to a wide number of exogenous and endogenous hydrophobic electrophiles. The protein is Putative glutathione S-transferase alpha-5 (gsta5) of Dictyostelium discoideum (Social amoeba).